Consider the following 896-residue polypeptide: Alanine--tRNA ligase (896 aa).

4 residues coordinate Zn(2+): His-574, His-578, Cys-677, and His-681.

The protein belongs to the class-II aminoacyl-tRNA synthetase family. Zn(2+) is required as a cofactor.

The protein localises to the cytoplasm. The enzyme catalyses tRNA(Ala) + L-alanine + ATP = L-alanyl-tRNA(Ala) + AMP + diphosphate. In terms of biological role, catalyzes the attachment of alanine to tRNA(Ala) in a two-step reaction: alanine is first activated by ATP to form Ala-AMP and then transferred to the acceptor end of tRNA(Ala). Also edits incorrectly charged Ser-tRNA(Ala) and Gly-tRNA(Ala) via its editing domain. In Mycoplasma mycoides subsp. mycoides SC (strain CCUG 32753 / NCTC 10114 / PG1), this protein is Alanine--tRNA ligase.